We begin with the raw amino-acid sequence, 935 residues long: Phosphoenolpyruvate carboxylase (935 aa).

Catalysis depends on residues His-161 and Lys-593.

This sequence belongs to the PEPCase type 1 family. Mg(2+) is required as a cofactor.

It catalyses the reaction oxaloacetate + phosphate = phosphoenolpyruvate + hydrogencarbonate. In terms of biological role, forms oxaloacetate, a four-carbon dicarboxylic acid source for the tricarboxylic acid cycle. In Mycolicibacterium paratuberculosis (strain ATCC BAA-968 / K-10) (Mycobacterium paratuberculosis), this protein is Phosphoenolpyruvate carboxylase.